The following is an 819-amino-acid chain: Leucine--tRNA ligase (819 aa).

Positions 51–61 match the 'HIGH' region motif; the sequence is PYPSGNLHIGH. Positions 586 to 590 match the 'KMSKS' region motif; the sequence is KMSKS. Residue Lys589 participates in ATP binding.

It belongs to the class-I aminoacyl-tRNA synthetase family.

The protein localises to the cytoplasm. The enzyme catalyses tRNA(Leu) + L-leucine + ATP = L-leucyl-tRNA(Leu) + AMP + diphosphate. The sequence is that of Leucine--tRNA ligase from Deinococcus geothermalis (strain DSM 11300 / CIP 105573 / AG-3a).